A 204-amino-acid chain; its full sequence is Urease accessory protein UreG (204 aa).

Position 11-18 (11-18) interacts with GTP; it reads GPVGAGKT.

It belongs to the SIMIBI class G3E GTPase family. UreG subfamily. As to quaternary structure, homodimer. UreD, UreF and UreG form a complex that acts as a GTP-hydrolysis-dependent molecular chaperone, activating the urease apoprotein by helping to assemble the nickel containing metallocenter of UreC. The UreE protein probably delivers the nickel.

Its subcellular location is the cytoplasm. Its function is as follows. Facilitates the functional incorporation of the urease nickel metallocenter. This process requires GTP hydrolysis, probably effectuated by UreG. This is Urease accessory protein UreG from Staphylococcus epidermidis (strain ATCC 35984 / DSM 28319 / BCRC 17069 / CCUG 31568 / BM 3577 / RP62A).